A 321-amino-acid polypeptide reads, in one-letter code: Probable arabinan endo-1,5-alpha-L-arabinosidase C (321 aa).

Positions 1 to 18 are cleaved as a signal peptide; the sequence is MYLYTLILLFLASANVNA. Asp-33 functions as the Proton acceptor in the catalytic mechanism. An N-linked (GlcNAc...) asparagine glycan is attached at Asn-192. The active-site Proton donor is Glu-200. An N-linked (GlcNAc...) asparagine glycan is attached at Asn-224.

This sequence belongs to the glycosyl hydrolase 43 family.

It localises to the secreted. The enzyme catalyses Endohydrolysis of (1-&gt;5)-alpha-arabinofuranosidic linkages in (1-&gt;5)-arabinans.. Its pathway is glycan metabolism; L-arabinan degradation. Its function is as follows. Endo-1,5-alpha-L-arabinanase involved in degradation of pectin. Its preferred substrate is linear 1,5-alpha-L-arabinan. This chain is Probable arabinan endo-1,5-alpha-L-arabinosidase C (abnC), found in Aspergillus fumigatus (strain ATCC MYA-4609 / CBS 101355 / FGSC A1100 / Af293) (Neosartorya fumigata).